Consider the following 326-residue polypeptide: Putative ribose-phosphate pyrophosphokinase 2 (326 aa).

Residues 43–45 and 102–103 contribute to the ATP site; these read DGE and RQ. Residue His136 participates in Mg(2+) binding. D-ribose 5-phosphate is bound by residues Asp225 and 229–233; that span reads NTGKT.

It belongs to the ribose-phosphate pyrophosphokinase family. Class I subfamily. In terms of assembly, homohexamer. Mg(2+) serves as cofactor.

Its subcellular location is the cytoplasm. The enzyme catalyses D-ribose 5-phosphate + ATP = 5-phospho-alpha-D-ribose 1-diphosphate + AMP + H(+). It participates in metabolic intermediate biosynthesis; 5-phospho-alpha-D-ribose 1-diphosphate biosynthesis; 5-phospho-alpha-D-ribose 1-diphosphate from D-ribose 5-phosphate (route I): step 1/1. Involved in the biosynthesis of the central metabolite phospho-alpha-D-ribosyl-1-pyrophosphate (PRPP) via the transfer of pyrophosphoryl group from ATP to 1-hydroxyl of ribose-5-phosphate (Rib-5-P). This chain is Putative ribose-phosphate pyrophosphokinase 2, found in Streptococcus pyogenes serotype M3 (strain SSI-1).